The chain runs to 315 residues: Phosphatidylglycerol--prolipoprotein diacylglyceryl transferase (315 aa).

The next 2 helical transmembrane spans lie at 19 to 39 (FTIH…VWIL) and 93 to 113 (VWEG…VAFL). Residue arginine 141 coordinates a 1,2-diacyl-sn-glycero-3-phospho-(1'-sn-glycerol). A run of 2 helical transmembrane segments spans residues 188-208 (LFHP…ALII) and 256-276 (MWTA…LYQY).

Belongs to the Lgt family.

It is found in the cell membrane. The catalysed reaction is L-cysteinyl-[prolipoprotein] + a 1,2-diacyl-sn-glycero-3-phospho-(1'-sn-glycerol) = an S-1,2-diacyl-sn-glyceryl-L-cysteinyl-[prolipoprotein] + sn-glycerol 1-phosphate + H(+). The protein operates within protein modification; lipoprotein biosynthesis (diacylglyceryl transfer). In terms of biological role, catalyzes the transfer of the diacylglyceryl group from phosphatidylglycerol to the sulfhydryl group of the N-terminal cysteine of a prolipoprotein, the first step in the formation of mature lipoproteins. In Bifidobacterium longum subsp. infantis (strain ATCC 15697 / DSM 20088 / JCM 1222 / NCTC 11817 / S12), this protein is Phosphatidylglycerol--prolipoprotein diacylglyceryl transferase.